The following is a 176-amino-acid chain: Cell division control protein 31 (176 aa).

A compositionally biased stretch (basic residues) spans 1 to 12 (MFANARAKRRSR). The segment at 1 to 21 (MFANARAKRRSRASSPTPARL) is disordered. EF-hand domains follow at residues 34-69 (EQRQDINEAFKLFDSDKDNAIDYHELRAAMRALGFN), 70-105 (AEKSEVLKILRDFDKTGKGYLQMEDFVRVMTEKIVE), 107-142 (DPLEEIKRAFELFDDDETGKISLRNLRRVAKELNEN), and 143-176 (IDDQELEAMIEEFDLDQDGEINEQEFIAIMMDEA). The Ca(2+) site is built by D47, D49, D51, and E58. Ca(2+)-binding residues include D156, D158, D160, E162, and E167.

Belongs to the centrin family. In terms of assembly, component of the spindle pole body (SPB), acting as the connector of microtubule arrays in the cytoplasm and the nucleoplasm, is involved in nuclear positioning before chromosome segregation, SPB separation, spindle formation, chromosome segregation, nuclear migration into the bud, nuclear reorientation after cytokinesis and nuclear fusion during conjugation. The SPB half-bridge, which is tightly associated with the cytoplasmic side of the nuclear envelope and the SPB, is playing a key role as the starting structure for and in the initiation of SPB duplication in G1. Within the complex, interacts with sad1.

The protein resides in the nucleus. Its function is as follows. Required for the proper coordination between exit from mitosis and the initiation of septation. Has a role in bipolar spindle formation during spindle pole body (SPB) duplication. Required for the localization of sad1 to the SPB. This Schizosaccharomyces pombe (strain 972 / ATCC 24843) (Fission yeast) protein is Cell division control protein 31 (cdc31).